We begin with the raw amino-acid sequence, 452 residues long: D-inositol 3-phosphate glycosyltransferase (452 aa).

His-25 contacts 1D-myo-inositol 3-phosphate. Residues 31 to 32 and Gly-39 contribute to the UDP-N-acetyl-alpha-D-glucosamine site; that span reads QP. 1D-myo-inositol 3-phosphate contacts are provided by residues 36–41, Lys-94, Tyr-127, Thr-151, and Arg-171; that span reads DAGGMN. UDP-N-acetyl-alpha-D-glucosamine-binding residues include Arg-245, Lys-250, and Gln-309. 3 residues coordinate Mg(2+): Tyr-318, Arg-319, and Ser-321. The UDP-N-acetyl-alpha-D-glucosamine site is built by Glu-331 and Glu-339. Mg(2+) is bound at residue Thr-345.

This sequence belongs to the glycosyltransferase group 1 family. MshA subfamily. As to quaternary structure, homodimer.

It catalyses the reaction 1D-myo-inositol 3-phosphate + UDP-N-acetyl-alpha-D-glucosamine = 1D-myo-inositol 2-acetamido-2-deoxy-alpha-D-glucopyranoside 3-phosphate + UDP + H(+). Its function is as follows. Catalyzes the transfer of a N-acetyl-glucosamine moiety to 1D-myo-inositol 3-phosphate to produce 1D-myo-inositol 2-acetamido-2-deoxy-glucopyranoside 3-phosphate in the mycothiol biosynthesis pathway. The polypeptide is D-inositol 3-phosphate glycosyltransferase (Rhodococcus jostii (strain RHA1)).